Reading from the N-terminus, the 243-residue chain is 1-(5-phosphoribosyl)-5-[(5-phosphoribosylamino)methylideneamino] imidazole-4-carboxamide isomerase (243 aa).

Asp-8 (proton acceptor) is an active-site residue. Asp-129 functions as the Proton donor in the catalytic mechanism.

Belongs to the HisA/HisF family.

It is found in the cytoplasm. It catalyses the reaction 1-(5-phospho-beta-D-ribosyl)-5-[(5-phospho-beta-D-ribosylamino)methylideneamino]imidazole-4-carboxamide = 5-[(5-phospho-1-deoxy-D-ribulos-1-ylimino)methylamino]-1-(5-phospho-beta-D-ribosyl)imidazole-4-carboxamide. Its pathway is amino-acid biosynthesis; L-histidine biosynthesis; L-histidine from 5-phospho-alpha-D-ribose 1-diphosphate: step 4/9. This chain is 1-(5-phosphoribosyl)-5-[(5-phosphoribosylamino)methylideneamino] imidazole-4-carboxamide isomerase, found in Parvibaculum lavamentivorans (strain DS-1 / DSM 13023 / NCIMB 13966).